The chain runs to 208 residues: Large ribosomal subunit protein uL3c (208 aa).

Positions 129-165 are disordered; sequence TRGPMTHGSKNHREPGSIGQGSTPGKVHKGKKMAGRL.

It belongs to the universal ribosomal protein uL3 family. Part of the 50S ribosomal subunit.

Its subcellular location is the plastid. It localises to the chloroplast. One of the primary rRNA binding proteins, it binds directly near the 3'-end of the 23S rRNA, where it nucleates assembly of the 50S subunit. This is Large ribosomal subunit protein uL3c (rpl3) from Rhodomonas salina (Cryptomonas salina).